A 309-amino-acid polypeptide reads, in one-letter code: Homoserine kinase (309 aa).

91–101 (PIGSGLGSSAC) is a binding site for ATP.

This sequence belongs to the GHMP kinase family. Homoserine kinase subfamily.

It is found in the cytoplasm. It carries out the reaction L-homoserine + ATP = O-phospho-L-homoserine + ADP + H(+). The protein operates within amino-acid biosynthesis; L-threonine biosynthesis; L-threonine from L-aspartate: step 4/5. In terms of biological role, catalyzes the ATP-dependent phosphorylation of L-homoserine to L-homoserine phosphate. The polypeptide is Homoserine kinase (Yersinia enterocolitica serotype O:8 / biotype 1B (strain NCTC 13174 / 8081)).